We begin with the raw amino-acid sequence, 360 residues long: Peptide chain release factor 1 (360 aa).

Glutamine 237 carries the post-translational modification N5-methylglutamine.

The protein belongs to the prokaryotic/mitochondrial release factor family. Post-translationally, methylated by PrmC. Methylation increases the termination efficiency of RF1.

It is found in the cytoplasm. Its function is as follows. Peptide chain release factor 1 directs the termination of translation in response to the peptide chain termination codons UAG and UAA. The polypeptide is Peptide chain release factor 1 (Pseudomonas syringae pv. syringae (strain B728a)).